A 426-amino-acid polypeptide reads, in one-letter code: Enolase (426 aa).

Glutamine 163 provides a ligand contact to (2R)-2-phosphoglycerate. Glutamate 205 functions as the Proton donor in the catalytic mechanism. Mg(2+) contacts are provided by aspartate 242, glutamate 283, and aspartate 310. (2R)-2-phosphoglycerate-binding residues include lysine 335, arginine 364, serine 365, and lysine 386. Lysine 335 functions as the Proton acceptor in the catalytic mechanism.

It belongs to the enolase family. Requires Mg(2+) as cofactor.

The protein resides in the cytoplasm. It is found in the secreted. Its subcellular location is the cell surface. The enzyme catalyses (2R)-2-phosphoglycerate = phosphoenolpyruvate + H2O. It participates in carbohydrate degradation; glycolysis; pyruvate from D-glyceraldehyde 3-phosphate: step 4/5. Its function is as follows. Catalyzes the reversible conversion of 2-phosphoglycerate (2-PG) into phosphoenolpyruvate (PEP). It is essential for the degradation of carbohydrates via glycolysis. The sequence is that of Enolase from Leifsonia xyli subsp. xyli (strain CTCB07).